Reading from the N-terminus, the 247-residue chain is Segregation and condensation protein A (247 aa).

It belongs to the ScpA family. Component of a cohesin-like complex composed of ScpA, ScpB and the Smc homodimer, in which ScpA and ScpB bind to the head domain of Smc. The presence of the three proteins is required for the association of the complex with DNA.

Its subcellular location is the cytoplasm. Functionally, participates in chromosomal partition during cell division. May act via the formation of a condensin-like complex containing Smc and ScpB that pull DNA away from mid-cell into both cell halves. The chain is Segregation and condensation protein A from Bacillus cereus (strain 03BB102).